Here is a 28-residue protein sequence, read N- to C-terminus: M-ectatotoxin-Eb2c (28 aa).

As to expression, expressed by the venom gland.

It is found in the secreted. Functionally, antimicrobial peptide active against Gram-negative bacterium E.coli MH1 (MIC=3.5 uM) and P.aeruginosa PAO1 (MIC=10 uM) and against Gram-positive bacterium A.globiformis VKM Ac-1112 (MIC=1.25 uM). This chain is M-ectatotoxin-Eb2c, found in Ectatomma brunneum (Ant).